A 575-amino-acid chain; its full sequence is Probable lysosomal cobalamin transporter (575 aa).

5 consecutive transmembrane segments (helical) span residues Leu-8–Ile-28, Ile-46–Val-66, Leu-95–Val-115, Tyr-144–Ile-164, and Ala-188–Thr-208. Asn-233 carries N-linked (GlcNAc...) asparagine glycosylation. The next 4 helical transmembrane spans lie at Leu-314–Ala-334, Ala-376–Val-396, Val-420–Val-440, and Phe-504–Ile-524. Residues Gln-537–Ala-549 are compositionally biased toward acidic residues. The interval Gln-537–Arg-556 is disordered.

This sequence belongs to the LIMR family. LMBRD1 subfamily.

The protein resides in the lysosome membrane. Its function is as follows. Probable lysosomal cobalamin transporter. Required to export cobalamin from lysosomes allowing its conversion to cofactors. This chain is Probable lysosomal cobalamin transporter, found in Emericella nidulans (strain FGSC A4 / ATCC 38163 / CBS 112.46 / NRRL 194 / M139) (Aspergillus nidulans).